Consider the following 1416-residue polypeptide: 1-phosphatidylinositol 4,5-bisphosphate phosphodiesterase eta-2 (1416 aa).

The necessary for plasma membrane localization stretch occupies residues 1–155; that stretch reads MSGPWPSPDS…WVTGLRYLMA (155 aa). The PH domain maps to 47 to 155; sequence GAMQEGMQMV…WVTGLRYLMA (109 aa). 2 consecutive EF-hand domains span residues 169–204 and 205–241; these read TRDQWLKQTFDEADKNGDGSLSIGEVLQLLHKLNVN and LPRQRVKQMFREADTDDHQGTLGFEEFCAFYKMMSTR. Asp182, Asn184, Asp186, Ser188, and Glu193 together coordinate Ca(2+). The PI-PLC X-box domain maps to 326-471; sequence QDMTQPLSHY…LKGKILVKGK (146 aa). His341 is a catalytic residue. Residues Asn342, Glu371, and Asp373 each contribute to the Ca(2+) site. Residue His385 is part of the active site. Glu420 contacts Ca(2+). 2 residues coordinate substrate: Lys469 and Lys471. Phosphoserine occurs at positions 487 and 491. The segment at 535 to 620 is disordered; it reads DPNNFSVSTL…RGATRQKKTM (86 aa). Residues 537 to 546 show a composition bias toward polar residues; that stretch reads NNFSVSTLSP. A compositionally biased stretch (basic residues) spans 581 to 592; sequence SRRKKKGSKLKK. 2 positions are modified to phosphoserine: Ser595 and Ser605. Residues 626–740 form the PI-PLC Y-box domain; it reads LSDLVKYTKS…GYVLKPGCMC (115 aa). Substrate is bound by residues Ser653 and Arg680. One can recognise a C2 domain in the interval 740–869; it reads CQGVFNPNSE…PGYRHVYLEG (130 aa). Ca(2+) is bound by residues Ile784, Asp786, Asp810, Asp839, His840, and Asp841. 3 disordered regions span residues 905-1109, 1121-1222, and 1315-1405; these read GSLD…GGWR, YSDA…LQPR, and ITSP…GPAS. Residues 1011 to 1021 are compositionally biased toward pro residues; sequence APGPGPPPPAA. Polar residues predominate over residues 1073–1083; the sequence is GSQTDGRSQPR. A compositionally biased stretch (low complexity) spans 1143 to 1166; sequence VSSSSSMSSSDTVIDLSLPSLGLG. A compositionally biased stretch (polar residues) spans 1199–1208; that stretch reads KSKSNPNLRA. The span at 1324–1333 shows a compositional bias: gly residues; sequence AGEGVAGGPG.

Ca(2+) serves as cofactor. Expressed in retina and kidney.

The protein resides in the cytoplasm. It localises to the cell membrane. It catalyses the reaction a 1,2-diacyl-sn-glycero-3-phospho-(1D-myo-inositol-4,5-bisphosphate) + H2O = 1D-myo-inositol 1,4,5-trisphosphate + a 1,2-diacyl-sn-glycerol + H(+). Its activity is regulated as follows. Activity is stimulated by GNB1:GNG2. In terms of biological role, the production of the second messenger molecules diacylglycerol (DAG) and inositol 1,4,5-trisphosphate (IP3) is mediated by activated phosphatidylinositol-specific phospholipase C enzymes. This phospholipase activity is very sensitive to calcium. May be important for formation and maintenance of the neuronal network in the postnatal brain. The chain is 1-phosphatidylinositol 4,5-bisphosphate phosphodiesterase eta-2 from Homo sapiens (Human).